A 130-amino-acid chain; its full sequence is Large ribosomal subunit protein bL17 (130 aa).

The protein belongs to the bacterial ribosomal protein bL17 family. Part of the 50S ribosomal subunit. Contacts protein L32.

This is Large ribosomal subunit protein bL17 from Delftia acidovorans (strain DSM 14801 / SPH-1).